Reading from the N-terminus, the 159-residue chain is 2-C-methyl-D-erythritol 2,4-cyclodiphosphate synthase (159 aa).

A divalent metal cation-binding residues include Asp-8 and His-10. 4-CDP-2-C-methyl-D-erythritol 2-phosphate is bound by residues 8-10 (DVH) and 34-35 (HS). His-42 serves as a coordination point for a divalent metal cation. Residues 56-58 (DIG), 61-65 (FPDTD), 100-106 (AQAPKML), 132-135 (TTTE), Phe-139, and Arg-142 each bind 4-CDP-2-C-methyl-D-erythritol 2-phosphate.

The protein belongs to the IspF family. Homotrimer. A divalent metal cation is required as a cofactor.

The enzyme catalyses 4-CDP-2-C-methyl-D-erythritol 2-phosphate = 2-C-methyl-D-erythritol 2,4-cyclic diphosphate + CMP. It participates in isoprenoid biosynthesis; isopentenyl diphosphate biosynthesis via DXP pathway; isopentenyl diphosphate from 1-deoxy-D-xylulose 5-phosphate: step 4/6. Functionally, involved in the biosynthesis of isopentenyl diphosphate (IPP) and dimethylallyl diphosphate (DMAPP), two major building blocks of isoprenoid compounds. Catalyzes the conversion of 4-diphosphocytidyl-2-C-methyl-D-erythritol 2-phosphate (CDP-ME2P) to 2-C-methyl-D-erythritol 2,4-cyclodiphosphate (ME-CPP) with a corresponding release of cytidine 5-monophosphate (CMP). This Citrobacter koseri (strain ATCC BAA-895 / CDC 4225-83 / SGSC4696) protein is 2-C-methyl-D-erythritol 2,4-cyclodiphosphate synthase.